Consider the following 203-residue polypeptide: Glycerol-3-phosphate acyltransferase (203 aa).

The next 4 membrane-spanning stretches (helical) occupy residues 3–23, 75–95, 113–133, and 156–176; these read LASA…AILV, LGLE…GHLF, VILG…LIVA, and LLTG…LIYW.

Belongs to the PlsY family. As to quaternary structure, probably interacts with PlsX.

It localises to the cell inner membrane. It catalyses the reaction an acyl phosphate + sn-glycerol 3-phosphate = a 1-acyl-sn-glycero-3-phosphate + phosphate. It functions in the pathway lipid metabolism; phospholipid metabolism. Functionally, catalyzes the transfer of an acyl group from acyl-phosphate (acyl-PO(4)) to glycerol-3-phosphate (G3P) to form lysophosphatidic acid (LPA). This enzyme utilizes acyl-phosphate as fatty acyl donor, but not acyl-CoA or acyl-ACP. The sequence is that of Glycerol-3-phosphate acyltransferase from Thioalkalivibrio sulfidiphilus (strain HL-EbGR7).